Consider the following 257-residue polypeptide: Hydroxyacylglutathione hydrolase (257 aa).

Zn(2+)-binding residues include His-53, His-55, Asp-57, His-58, His-109, Asp-126, and His-164.

The protein belongs to the metallo-beta-lactamase superfamily. Glyoxalase II family. Monomer. Zn(2+) is required as a cofactor.

It catalyses the reaction an S-(2-hydroxyacyl)glutathione + H2O = a 2-hydroxy carboxylate + glutathione + H(+). It functions in the pathway secondary metabolite metabolism; methylglyoxal degradation; (R)-lactate from methylglyoxal: step 2/2. Its function is as follows. Thiolesterase that catalyzes the hydrolysis of S-D-lactoyl-glutathione to form glutathione and D-lactic acid. The polypeptide is Hydroxyacylglutathione hydrolase (Baumannia cicadellinicola subsp. Homalodisca coagulata).